The chain runs to 1069 residues: Rab GTPase-activating protein 1 (1069 aa).

The interval 1–79 (MDDKASVGKI…DPPMDDQPGE (79 aa)) is disordered. The segment covering 7–22 (VGKISVSSDSVSTLNS) has biased composition (low complexity). Position 42 is a phosphoserine (Ser-42). The PID domain occupies 142–298 (EDSVVFSKLT…IFTFSVSLEI (157 aa)). Ser-360 is subject to Phosphoserine. A disordered region spans residues 482-527 (ERERRKTTASPSVRLPQSGSQSSVIPSPPEDDEEEDNDEPLLSGSG). A compositionally biased stretch (polar residues) spans 489 to 506 (TASPSVRLPQSGSQSSVI). Positions 510 to 520 (PEDDEEEDNDE) are enriched in acidic residues. The Rab-GAP TBC domain occupies 566–752 (GVPEALRGEV…HIIDLLLCEG (187 aa)). The stretch at 798 to 1047 (KKLMELACNM…ALNEVQAAKK (250 aa)) forms a coiled coil. Thr-996 carries the phosphothreonine modification.

In terms of assembly, interacts with RAB6A and tubulin gamma.

Its subcellular location is the cytoplasm. It localises to the cytosol. It is found in the cytoskeleton. The protein resides in the microtubule organizing center. The protein localises to the centrosome. Functionally, may act as a GTPase-activating protein of RAB6A. May play a role in microtubule nucleation by centrosome. May participate in a RAB6A-mediated pathway involved in the metaphase-anaphase transition. The protein is Rab GTPase-activating protein 1 (RABGAP1) of Homo sapiens (Human).